We begin with the raw amino-acid sequence, 349 residues long: Histone-lysine N-methyltransferase ATXR6 (349 aa).

The tract at residues 1 to 28 (MVAVRRRRTQASNPRSEPPQHMSDHDSD) is disordered. A PHD-type zinc finger spans residues 32-82 (DTVCEECSSGKQPAKLLLCDKCDKGFHLFCLRPILVSVPKGSWFCPSCSKH). A PIP motif motif is present at residues 92–99 (QTKIIDFF). A disordered region spans residues 105–126 (PDSSQISSSSDSIGKKRKKTSL). The span at 106-116 (DSSQISSSSDS) shows a compositional bias: low complexity. Met-190 lines the substrate pocket. Residues 214 to 337 (PPLMVVFDPY…KGERLYYDYN (124 aa)) enclose the SET domain. Residues 224 to 226 (EGF) and 287 to 291 (RFISG) contribute to the S-adenosyl-L-methionine site. Substrate is bound by residues Arg-309 and 339 to 340 (YE). Positions 343 and 349 each coordinate S-adenosyl-L-methionine.

Belongs to the class V-like SAM-binding methyltransferase superfamily. Histone-lysine methyltransferase family. TRX/MLL subfamily. As to quaternary structure, interacts with PCNA1 and PCNA2. Interacts (via PHD domain) with HTR1 (via N-terminus). Interacts with IPS1. Expressed in leaves, roots, stems, flowers and siliques. Up-regulated in tissues where cell division is active.

It is found in the nucleus. It carries out the reaction L-lysyl(27)-[histone H3] + S-adenosyl-L-methionine = N(6)-methyl-L-lysyl(27)-[histone H3] + S-adenosyl-L-homocysteine + H(+). Functionally, histone methyltransferase that specifically monomethylates 'Lys-27' of histone H3 (H3K27me1). Has higher activity on nucleosomes containing H3.1 than H3.3. Involved in the formation of constitutive heterochromatin and the silencing of heterochromatic elements. May act as a positive regulator of the G1-S transition. Influences which sets of rRNA gene variants are expressed or silenced. Up-regulated by E2FB. In Arabidopsis thaliana (Mouse-ear cress), this protein is Histone-lysine N-methyltransferase ATXR6 (ATXR6).